Consider the following 134-residue polypeptide: MPTINQLIRKERKKAIKKSKSPALVNCPQRRGVCTRVYTTTPKKPNSALRKVAKVRLTSGFEVISYIPGEGHNLQEHSIVLIRGGRVKDLPGVKYHIIRGALDTAGVQKRNVSRSKYGAKKGKAGAAPTTGKKK.

Asp-89 is subject to 3-methylthioaspartic acid. Residues 109 to 134 are disordered; the sequence is KRNVSRSKYGAKKGKAGAAPTTGKKK. Over residues 111–123 the composition is skewed to basic residues; that stretch reads NVSRSKYGAKKGK. The segment covering 124–134 has biased composition (low complexity); it reads AGAAPTTGKKK.

This sequence belongs to the universal ribosomal protein uS12 family. In terms of assembly, part of the 30S ribosomal subunit. Contacts proteins S8 and S17. May interact with IF1 in the 30S initiation complex.

Its function is as follows. With S4 and S5 plays an important role in translational accuracy. In terms of biological role, interacts with and stabilizes bases of the 16S rRNA that are involved in tRNA selection in the A site and with the mRNA backbone. Located at the interface of the 30S and 50S subunits, it traverses the body of the 30S subunit contacting proteins on the other side and probably holding the rRNA structure together. The combined cluster of proteins S8, S12 and S17 appears to hold together the shoulder and platform of the 30S subunit. In Wolinella succinogenes (strain ATCC 29543 / DSM 1740 / CCUG 13145 / JCM 31913 / LMG 7466 / NCTC 11488 / FDC 602W) (Vibrio succinogenes), this protein is Small ribosomal subunit protein uS12.